The sequence spans 341 residues: tRNA N6-adenosine threonylcarbamoyltransferase (341 aa).

Residues His111 and His115 each contribute to the Fe cation site. Substrate contacts are provided by residues 134-138, Asp167, Gly180, and Asn276; that span reads LVSGG. Asp304 provides a ligand contact to Fe cation.

It belongs to the KAE1 / TsaD family. It depends on Fe(2+) as a cofactor.

It localises to the cytoplasm. It catalyses the reaction L-threonylcarbamoyladenylate + adenosine(37) in tRNA = N(6)-L-threonylcarbamoyladenosine(37) in tRNA + AMP + H(+). Functionally, required for the formation of a threonylcarbamoyl group on adenosine at position 37 (t(6)A37) in tRNAs that read codons beginning with adenine. Is involved in the transfer of the threonylcarbamoyl moiety of threonylcarbamoyl-AMP (TC-AMP) to the N6 group of A37, together with TsaE and TsaB. TsaD likely plays a direct catalytic role in this reaction. The protein is tRNA N6-adenosine threonylcarbamoyltransferase of Pseudomonas putida (strain ATCC 700007 / DSM 6899 / JCM 31910 / BCRC 17059 / LMG 24140 / F1).